The sequence spans 470 residues: Serine hydroxymethyltransferase, cytosolic (470 aa).

Polar residues predominate over residues Met-1–Arg-11. Positions Met-1–Pro-23 are disordered. Position 2 is an N-acetylserine (Ser-2). Over residues Gln-12–Pro-23 the composition is skewed to basic and acidic residues. An N6-(pyridoxal phosphate)lysine modification is found at Lys-249.

This sequence belongs to the SHMT family. Homotetramer. Pyridoxal 5'-phosphate is required as a cofactor.

It is found in the cytoplasm. The enzyme catalyses (6R)-5,10-methylene-5,6,7,8-tetrahydrofolate + glycine + H2O = (6S)-5,6,7,8-tetrahydrofolate + L-serine. It participates in one-carbon metabolism; tetrahydrofolate interconversion. Its function is as follows. Interconversion of serine and glycine. The protein is Serine hydroxymethyltransferase, cytosolic (SHM2) of Candida albicans (strain SC5314 / ATCC MYA-2876) (Yeast).